Here is a 163-residue protein sequence, read N- to C-terminus: Single-stranded DNA-binding protein 1 (163 aa).

Positions 1 to 104 (MINNVVLVGR…VVAESFQLLE (104 aa)) constitute an SSB domain. Positions 106–163 (RATREGGSPNSYNNGGYNNAPSNNSYSASSQQTPNFSRDESPFGNSNPMDISDDDLPF) are disordered. A compositionally biased stretch (low complexity) spans 111–135 (GGSPNSYNNGGYNNAPSNNSYSASS). The Important for interaction with partner proteins signature appears at 158 to 163 (DDDLPF).

In terms of assembly, homotetramer.

Functionally, plays an important role in DNA replication, recombination and repair. Binds to ssDNA and to an array of partner proteins to recruit them to their sites of action during DNA metabolism. In Streptococcus agalactiae serotype III (strain NEM316), this protein is Single-stranded DNA-binding protein 1 (ssb1).